We begin with the raw amino-acid sequence, 53 residues long: Snake venom serine protease LmrSP-4 (53 aa).

Cysteines 26 and 42 form a disulfide. Catalysis depends on H41, which acts as the Charge relay system.

Monomer. Post-translationally, N-glycosylated. Expressed by the venom gland.

The protein localises to the secreted. Its activity is regulated as follows. Inhibited by the small molecule serine protease inhibitors phenylmethylsulfonyl fluoride (PMSF) and benzamidine. Functionally, snake venom serine protease that has fibrinogenolytic activity. Hydrolyzes the alpha-chain of fibrinogen (FGA), without affecting the beta- and the gamma-chains. Also displays hydrolytic activity towards S-2302 (plasma kallikrein substrate) and S-2251 (substrate for plasmin), but has no hydrolytic activity with S-2238 (thrombin substrate) or S-2222 (factor Xa). The chain is Snake venom serine protease LmrSP-4 from Lachesis muta rhombeata (Bushmaster).